The chain runs to 472 residues: E3 ubiquitin-protein ligase MYLIP-A (472 aa).

The 279-residue stretch at 1 to 279 folds into the FERM domain; it reads MLCHVTRPDA…ETHAFYRCDT (279 aa). The RING-type zinc finger occupies 384-419; it reads CMLCCEEEIDAAFCPCGHMVCCQNCAAQLQSCPVCR.

In terms of assembly, interacts with anxa5. As to expression, ubiquitous.

It is found in the cytoplasm. The protein localises to the cytosol. It carries out the reaction S-ubiquitinyl-[E2 ubiquitin-conjugating enzyme]-L-cysteine + [acceptor protein]-L-lysine = [E2 ubiquitin-conjugating enzyme]-L-cysteine + N(6)-ubiquitinyl-[acceptor protein]-L-lysine.. It functions in the pathway protein modification; protein ubiquitination. In terms of biological role, E3 ubiquitin-protein ligase that mediates ubiquitination and subsequent proteasomal degradation of myosin regulatory light chain (MRLC). Regulates cell movements during gastrulation by acting downstream of fz7 to antagonize the frizzled-signaling pathway. This chain is E3 ubiquitin-protein ligase MYLIP-A (mylipa), found in Danio rerio (Zebrafish).